A 127-amino-acid chain; its full sequence is Aspartate 1-decarboxylase (127 aa).

The active-site Schiff-base intermediate with substrate; via pyruvic acid is Ser25. Ser25 is modified (pyruvic acid (Ser)). Thr57 serves as a coordination point for substrate. The Proton donor role is filled by Tyr58. Substrate is bound at residue 73–75; the sequence is GAA.

The protein belongs to the PanD family. Heterooctamer of four alpha and four beta subunits. Pyruvate is required as a cofactor. Post-translationally, is synthesized initially as an inactive proenzyme, which is activated by self-cleavage at a specific serine bond to produce a beta-subunit with a hydroxyl group at its C-terminus and an alpha-subunit with a pyruvoyl group at its N-terminus.

The protein resides in the cytoplasm. It carries out the reaction L-aspartate + H(+) = beta-alanine + CO2. The protein operates within cofactor biosynthesis; (R)-pantothenate biosynthesis; beta-alanine from L-aspartate: step 1/1. In terms of biological role, catalyzes the pyruvoyl-dependent decarboxylation of aspartate to produce beta-alanine. The polypeptide is Aspartate 1-decarboxylase (Listeria innocua serovar 6a (strain ATCC BAA-680 / CLIP 11262)).